We begin with the raw amino-acid sequence, 184 residues long: Nucleoporin-62 C-terminal-like protein (184 aa).

The stretch at 117-151 (RILHGEVNKVKLDQKRLEQELDFILSQQQELEFLL) forms a coiled coil.

Belongs to the nucleoporin NSP1/NUP62 family.

This Homo sapiens (Human) protein is Nucleoporin-62 C-terminal-like protein (NUP62CL).